The sequence spans 39 residues: Photosystem I reaction center subunit IX (39 aa).

The chain crosses the membrane as a helical span at residues 7–27 (FLTTAPVAFILFSSFVFALFI).

This sequence belongs to the PsaJ family.

The protein localises to the cellular thylakoid membrane. Its function is as follows. May help in the organization of the PsaE and PsaF subunits. This Synechococcus sp. (strain JA-2-3B'a(2-13)) (Cyanobacteria bacterium Yellowstone B-Prime) protein is Photosystem I reaction center subunit IX.